The sequence spans 128 residues: Small ribosomal subunit protein uS11 (128 aa).

It belongs to the universal ribosomal protein uS11 family. Part of the 30S ribosomal subunit. Interacts with proteins S7 and S18. Binds to IF-3.

Its function is as follows. Located on the platform of the 30S subunit, it bridges several disparate RNA helices of the 16S rRNA. Forms part of the Shine-Dalgarno cleft in the 70S ribosome. The protein is Small ribosomal subunit protein uS11 of Desulforudis audaxviator (strain MP104C).